Here is a 78-residue protein sequence, read N- to C-terminus: Exodeoxyribonuclease 7 small subunit (78 aa).

This sequence belongs to the XseB family. Heterooligomer composed of large and small subunits.

Its subcellular location is the cytoplasm. It carries out the reaction Exonucleolytic cleavage in either 5'- to 3'- or 3'- to 5'-direction to yield nucleoside 5'-phosphates.. In terms of biological role, bidirectionally degrades single-stranded DNA into large acid-insoluble oligonucleotides, which are then degraded further into small acid-soluble oligonucleotides. The sequence is that of Exodeoxyribonuclease 7 small subunit from Actinobacillus succinogenes (strain ATCC 55618 / DSM 22257 / CCUG 43843 / 130Z).